We begin with the raw amino-acid sequence, 205 residues long: Probable thymidylate kinase (205 aa).

Residue 10–17 (GIDGSGKT) participates in ATP binding.

This sequence belongs to the thymidylate kinase family.

It catalyses the reaction dTMP + ATP = dTDP + ADP. This is Probable thymidylate kinase (tmk) from Pyrococcus abyssi (strain GE5 / Orsay).